Reading from the N-terminus, the 150-residue chain is MAKVDKVENKDAVVEKKVDKKSKKSSYSKKKKIKKNILNGIAYVQSTFNNTIISIADTNGNVISWASAGQKGFKGSRKSTPYAAQIAADSAASKALEYGMKTLSVEVKGPGSGRETALRALQARGFKILSIKDTTPMPHNGVRPPKKRRV.

This sequence belongs to the universal ribosomal protein uS11 family. As to quaternary structure, part of the 30S ribosomal subunit. Interacts with proteins S7 and S18. Binds to IF-3.

In terms of biological role, located on the platform of the 30S subunit, it bridges several disparate RNA helices of the 16S rRNA. Forms part of the Shine-Dalgarno cleft in the 70S ribosome. In Pelagibacter ubique (strain HTCC1062), this protein is Small ribosomal subunit protein uS11.